Consider the following 213-residue polypeptide: MRSKYIVIEGLEGAGKTTARNVVVETLEQLGIRDMVFTREPGGTQLAEKLRSLVLDIKSVGDEVITDKAEVLMFYAARVQLVETVIKPALANGTWVIGDRHDLSTQAYQGGGRGIDQHMLATLRDAVLGDFRPDLTLYLDVTPEVGLKRARARGELDRIEQESFDFFNRTRARYLELAAQDKSIHTIDATQPLEAVMDAIRTTVTNWVKELDA.

ATP is bound at residue glycine 10–threonine 17.

This sequence belongs to the thymidylate kinase family.

The enzyme catalyses dTMP + ATP = dTDP + ADP. Its function is as follows. Phosphorylation of dTMP to form dTDP in both de novo and salvage pathways of dTTP synthesis. The chain is Thymidylate kinase from Escherichia coli O6:K15:H31 (strain 536 / UPEC).